A 510-amino-acid chain; its full sequence is 3,4-dihydroxyphenylacetaldehyde synthase (510 aa).

Residue Asn192 is part of the active site. Lys303 carries the N6-(pyridoxal phosphate)lysine modification.

It belongs to the group II decarboxylase family. It depends on pyridoxal 5'-phosphate as a cofactor.

The catalysed reaction is L-dopa + O2 + H2O + H(+) = 3,4-dihydroxyphenylacetaldehyde + H2O2 + NH4(+) + CO2. Functionally, catalyzes the decarboxylation-oxidative deamination of L-3,4-dihydroxyphenylalanine (L-DOPA) to 3,4-dihydroxylphenylacetaldehyde (DHPAA). Involved in cuticle development. Probably responsible for the protein cross-linking during the development of flexible cuticles. This chain is 3,4-dihydroxyphenylacetaldehyde synthase (amd), found in Drosophila melanogaster (Fruit fly).